We begin with the raw amino-acid sequence, 220 residues long: UPF0319 protein YccT (220 aa).

Positions M1–A20 are cleaved as a signal peptide.

This sequence belongs to the UPF0319 family.

The protein is UPF0319 protein YccT of Salmonella heidelberg (strain SL476).